Reading from the N-terminus, the 498-residue chain is Phenylalanine--tRNA ligase alpha subunit (498 aa).

L-phenylalanine-binding positions include threonine 328, 372-374, and tyrosine 412; that span reads QVE. Glutamate 414 contributes to the Mg(2+) binding site. Residue phenylalanine 438 coordinates L-phenylalanine.

The protein belongs to the class-II aminoacyl-tRNA synthetase family. Phe-tRNA synthetase alpha subunit type 2 subfamily. As to quaternary structure, tetramer of two alpha and two beta subunits. It depends on Mg(2+) as a cofactor.

Its subcellular location is the cytoplasm. The enzyme catalyses tRNA(Phe) + L-phenylalanine + ATP = L-phenylalanyl-tRNA(Phe) + AMP + diphosphate + H(+). The sequence is that of Phenylalanine--tRNA ligase alpha subunit from Drosophila melanogaster (Fruit fly).